Here is a 136-residue protein sequence, read N- to C-terminus: Histone H3.3C (136 aa).

Positions M1–K10 are enriched in polar residues. The segment at M1–P44 is disordered. T4 is modified (phosphothreonine; by HASPIN). K5 carries the post-translational modification Allysine; alternate. An N6,N6,N6-trimethyllysine; alternate modification is found at K5. K5 carries the N6,N6-dimethyllysine; alternate modification. An N6-(2-hydroxyisobutyryl)lysine; alternate modification is found at K5. The residue at position 5 (K5) is an N6-(beta-hydroxybutyryl)lysine; alternate. At K5 the chain carries N6-acetyllysine; alternate. An N6-methyllysine; alternate modification is found at K5. Position 6 is a 5-glutamyl dopamine; alternate (Q6). Q6 carries the 5-glutamyl serotonin; alternate modification. At T7 the chain carries Phosphothreonine; by PKC. R9 is subject to Citrulline; alternate. Residue R9 is modified to Symmetric dimethylarginine; by PRMT5; alternate. N6,N6,N6-trimethyllysine; alternate is present on K10. The residue at position 10 (K10) is an N6,N6-dimethyllysine; alternate. K10 is subject to N6-(2-hydroxyisobutyryl)lysine; alternate. K10 is modified (N6-(beta-hydroxybutyryl)lysine; alternate). An N6-acetyllysine; alternate modification is found at K10. K10 bears the N6-methyllysine; alternate mark. N6-lactoyllysine; alternate is present on K10. The residue at position 11 (S11) is an ADP-ribosylserine; alternate. At S11 the chain carries Phosphoserine; alternate; by AURKB, AURKC, RPS6KA3, RPS6KA4 and RPS6KA5. Residue T12 is modified to Phosphothreonine; by PKC. Position 15 is an N6-(2-hydroxyisobutyryl)lysine; alternate (K15). K15 is modified (N6-(beta-hydroxybutyryl)lysine; alternate). At K15 the chain carries N6-acetyllysine; alternate. An N6-lactoyllysine; alternate modification is found at K15. An N6-glutaryllysine; alternate modification is found at K15. The residue at position 15 (K15) is an N6-succinyllysine; alternate. Citrulline; alternate is present on R18. R18 bears the Asymmetric dimethylarginine; by CARM1; alternate mark. An N6-(2-hydroxyisobutyryl)lysine; alternate mark is found at K19 and K24. N6-(beta-hydroxybutyryl)lysine; alternate is present on residues K19 and K24. 2 positions are modified to N6-acetyllysine; alternate: K19 and K24. An N6-methyllysine; alternate mark is found at K19 and K24. N6-lactoyllysine; alternate is present on residues K19 and K24. K19 and K24 each carry N6-glutaryllysine; alternate. K19 and K24 each carry N6-butyryllysine; alternate. R27 carries the citrulline modification. K28 carries the post-translational modification N6,N6,N6-trimethyllysine; alternate. K28 bears the N6,N6-dimethyllysine; alternate mark. K28 bears the N6-(2-hydroxyisobutyryl)lysine; alternate mark. N6-acetyllysine; alternate is present on K28. At K28 the chain carries N6-methyllysine; alternate. An N6-lactoyllysine; alternate modification is found at K28. K28 is modified (N6-glutaryllysine; alternate). S29 bears the ADP-ribosylserine; alternate mark. Residue S29 is modified to Phosphoserine; alternate; by AURKB, AURKC and RPS6KA5. A Phosphoserine modification is found at S32. Position 37 is an N6,N6,N6-trimethyllysine; alternate (K37). K37 carries the post-translational modification N6,N6-dimethyllysine; alternate. K37 is subject to N6-(2-hydroxyisobutyryl)lysine; alternate. K37 is subject to N6-acetyllysine; alternate. The residue at position 37 (K37) is an N6-methyllysine; alternate. Position 38 is an N6-methyllysine (K38). Y42 is subject to Phosphotyrosine. Residue K57 is modified to N6,N6,N6-trimethyllysine; alternate. Residue K57 is modified to N6-(2-hydroxyisobutyryl)lysine; alternate. K57 carries the post-translational modification N6-(beta-hydroxybutyryl)lysine; alternate. K57 is subject to N6-acetyllysine; alternate. K57 is subject to N6-lactoyllysine; alternate. Position 57 is an N6-glutaryllysine; alternate (K57). Residue K57 is modified to N6-succinyllysine; alternate. The residue at position 57 (K57) is an N6-methyllysine; by EHMT2; alternate. S58 bears the Phosphoserine mark. N6-(2-hydroxyisobutyryl)lysine; alternate is present on residues K65 and K80. 2 positions are modified to N6-methyllysine; alternate: K65 and K80. K80 is modified (N6,N6,N6-trimethyllysine; alternate). N6,N6-dimethyllysine; alternate is present on K80. K80 is modified (N6-acetyllysine; alternate). An N6-lactoyllysine; alternate modification is found at K80. The residue at position 80 (K80) is an N6-glutaryllysine; alternate. Residue K80 is modified to N6-succinyllysine; alternate. T81 carries the phosphothreonine modification. The residue at position 87 (S87) is a Phosphoserine. T108 carries the phosphothreonine modification. Residues K116 and K123 each carry the N6-acetyllysine; alternate modification. K116 and K123 each carry N6-glutaryllysine; alternate. At K123 the chain carries N6-(2-hydroxyisobutyryl)lysine; alternate. K123 bears the N6-methyllysine; alternate mark. K123 carries the N6-succinyllysine; alternate modification.

This sequence belongs to the histone H3 family. As to quaternary structure, the nucleosome is a histone octamer containing two molecules each of H2A, H2B, H3 and H4 assembled in one H3-H4 heterotetramer and two H2A-H2B heterodimers. The octamer wraps approximately 147 bp of DNA. Acetylation is generally linked to gene activation. Acetylation on Lys-10 (H3K9ac) impairs methylation at Arg-9 (H3R8me2s). Acetylation on Lys-19 (H3K18ac) and Lys-24 (H3K24ac) favors methylation at Arg-18 (H3R17me). Acetylation at Lys-123 (H3K122ac) by EP300/p300 plays a central role in chromatin structure: localizes at the surface of the histone octamer and stimulates transcription, possibly by promoting nucleosome instability. Post-translationally, citrullination at Arg-9 (H3R8ci) and/or Arg-18 (H3R17ci) by PADI4 impairs methylation and represses transcription. In terms of processing, butyrylation of histones marks active promoters and competes with histone acetylation. It is present during late spermatogenesis. Asymmetric dimethylation at Arg-18 (H3R17me2a) by CARM1 is linked to gene activation. Symmetric dimethylation at Arg-9 (H3R8me2s) by PRMT5 is linked to gene repression. Post-translationally, methylation at Lys-5 (H3K4me), Lys-37 and Lys-80 are linked to gene activation. Methylation at Lys-5 (H3K4me) facilitates subsequent acetylation of H3 and H4. Methylation at Lys-80 is associated with DNA double-strand break (DSB) responses and is a specific target for TP53BP1. Methylation at Lys-10 (H3K9me) and Lys-28 (H3K27me) are linked to gene repression. Methylation at Lys-10 (H3K9me) is a specific target for HP1 proteins (CBX1, CBX3 and CBX5) and prevents subsequent phosphorylation at Ser-11 (H3S10ph) and acetylation of H3 and H4. Methylation at Lys-5 (H3K4me) and Lys-80 require preliminary monoubiquitination of H2B at 'Lys-120'. Methylation at Lys-10 (H3K9me) and Lys-28 (H3K27me) are enriched in inactive X chromosome chromatin. Monomethylation at Lys-57 (H3K56me1) by EHMT2/G9A in G1 phase promotes interaction with PCNA and is required for DNA replication. In terms of processing, phosphorylated at Thr-4 (H3T3ph) by HASPIN during prophase and dephosphorylated during anaphase. Phosphorylation at Ser-11 (H3S10ph) by AURKB is crucial for chromosome condensation and cell-cycle progression during mitosis and meiosis. In addition phosphorylation at Ser-11 (H3S10ph) by RPS6KA4 and RPS6KA5 is important during interphase because it enables the transcription of genes following external stimulation, like mitogens, stress, growth factors or UV irradiation and result in the activation of genes, such as c-fos and c-jun. Phosphorylation at Ser-11 (H3S10ph), which is linked to gene activation, prevents methylation at Lys-10 (H3K9me) but facilitates acetylation of H3 and H4. Phosphorylation at Ser-11 (H3S10ph) by AURKB mediates the dissociation of HP1 proteins (CBX1, CBX3 and CBX5) from heterochromatin. Phosphorylation at Ser-11 (H3S10ph) is also an essential regulatory mechanism for neoplastic cell transformation. Phosphorylated at Ser-29 (H3S28ph) by MAP3K20 isoform 1, RPS6KA5 or AURKB during mitosis or upon ultraviolet B irradiation. Phosphorylation at Thr-7 (H3T6ph) by PRKCB is a specific tag for epigenetic transcriptional activation that prevents demethylation of Lys-5 (H3K4me) by LSD1/KDM1A. At centromeres, specifically phosphorylated at Thr-12 (H3T11ph) from prophase to early anaphase, by DAPK3 and PKN1. Phosphorylation at Thr-12 (H3T11ph) by PKN1 or isoform M2 of PKM (PKM2) is a specific tag for epigenetic transcriptional activation that promotes demethylation of Lys-10 (H3K9me) by KDM4C/JMJD2C. Phosphorylation at Tyr-42 (H3Y41ph) by JAK2 promotes exclusion of CBX5 (HP1 alpha) from chromatin. Lysine deamination at Lys-5 (H3K4all) to form allysine is mediated by LOXL2. Allysine formation by LOXL2 only takes place on H3K4me3 and results in gene repression. Post-translationally, succinylation at Lys-80 (H3K79succ) by KAT2A takes place with a maximum frequency around the transcription start sites of genes. It gives a specific tag for epigenetic transcription activation. Desuccinylation at Lys-123 (H3K122succ) by SIRT7 in response to DNA damage promotes chromatin condensation and double-strand breaks (DSBs) repair. In terms of processing, serine ADP-ribosylation constitutes the primary form of ADP-ribosylation of proteins in response to DNA damage. Serine ADP-ribosylation at Ser-11 (H3S10ADPr) is mutually exclusive with phosphorylation at Ser-11 (H3S10ph) and impairs acetylation at Lys-10 (H3K9ac).

The protein localises to the nucleus. Its subcellular location is the chromosome. In terms of biological role, core component of nucleosome. Nucleosomes wrap and compact DNA into chromatin, limiting DNA accessibility to the cellular machineries which require DNA as a template. Histones thereby play a central role in transcription regulation, DNA repair, DNA replication and chromosomal stability. DNA accessibility is regulated via a complex set of post-translational modifications of histones, also called histone code, and nucleosome remodeling. This chain is Histone H3.3C, found in Mus musculus (Mouse).